The following is a 141-amino-acid chain: Nucleoside diphosphate kinase (141 aa).

Lys11, Phe59, Arg87, Thr93, Arg104, and Asn114 together coordinate ATP. The active-site Pros-phosphohistidine intermediate is the His117.

It belongs to the NDK family. As to quaternary structure, homotetramer. Requires Mg(2+) as cofactor.

It is found in the cytoplasm. The enzyme catalyses a 2'-deoxyribonucleoside 5'-diphosphate + ATP = a 2'-deoxyribonucleoside 5'-triphosphate + ADP. The catalysed reaction is a ribonucleoside 5'-diphosphate + ATP = a ribonucleoside 5'-triphosphate + ADP. Its function is as follows. Major role in the synthesis of nucleoside triphosphates other than ATP. The ATP gamma phosphate is transferred to the NDP beta phosphate via a ping-pong mechanism, using a phosphorylated active-site intermediate. This is Nucleoside diphosphate kinase from Haemophilus influenzae (strain ATCC 51907 / DSM 11121 / KW20 / Rd).